The sequence spans 948 residues: RNA polymerase-associated protein RapA (948 aa).

Residues 164–332 enclose the Helicase ATP-binding domain; the sequence is EVADRSAPRV…FARLRLLDPN (169 aa). 177 to 184 serves as a coordination point for ATP; it reads DEVGLGKT. Positions 278 to 281 match the DEAH box motif; sequence DEAH. In terms of domain architecture, Helicase C-terminal spans 473 to 627; the sequence is RVDWLIDTLK…TCPTGNALQH (155 aa).

The protein belongs to the SNF2/RAD54 helicase family. RapA subfamily. In terms of assembly, interacts with the RNAP. Has a higher affinity for the core RNAP than for the holoenzyme. Its ATPase activity is stimulated by binding to RNAP.

In terms of biological role, transcription regulator that activates transcription by stimulating RNA polymerase (RNAP) recycling in case of stress conditions such as supercoiled DNA or high salt concentrations. Probably acts by releasing the RNAP, when it is trapped or immobilized on tightly supercoiled DNA. Does not activate transcription on linear DNA. Probably not involved in DNA repair. This Pseudomonas putida (strain ATCC 47054 / DSM 6125 / CFBP 8728 / NCIMB 11950 / KT2440) protein is RNA polymerase-associated protein RapA.